Here is a 512-residue protein sequence, read N- to C-terminus: METPTPPLPSKDQLFPPLIQLVRALLWVLVITIGGAIVQRLFFHPLRKIPGPLTAAISGWDEFYHNIWRDGEWCKTYPKLHKEYNSPVIRIGPNHVHLNDIDAYETVFRVGTNFYKDKTFYTCADNDGSIFSLCDRDEHSERRKVLSSLFSKQAAEMTAPKVMSKLNELLDFMITQSKEGKACNITDLFRALAINWVADTLLGDCGDVVTYAETKPDLLEDIDGLSKLIPTLRFFPYLIPTLNSLAPSTSPAGVAKFKKICENYTRPRINDPIKNISQRSRASVVELLIAHRHEVYHKPPTVDYLAEEAFTFIDAGVDTTGGTLVAAIYHILRDPGILRRLREELDESQLFLSKGTPIDFKKLGNLPYLNAVINESHRIWPALPGPLPRVVPPEGLQVGSFFVPSGTILSSTHHCLHYNETVFPEPKKFKPERWLRTDKWEGDRYLNPYSRGSRACIGINLAQMELRLTLGHLFSHYDLQLCEPTLSSLEWKDHFVAHPKAPVMIHIGFRKA.

The chain crosses the membrane as a helical span at residues 18–38 (LIQLVRALLWVLVITIGGAIV). N-linked (GlcNAc...) asparagine glycans are attached at residues N184, N263, N275, N374, and N419. C456 contributes to the heme binding site.

Belongs to the cytochrome P450 family. Heme serves as cofactor.

It localises to the membrane. The enzyme catalyses hancockiamide A + reduced [NADPH--hemoprotein reductase] + O2 = hancockiamide G + oxidized [NADPH--hemoprotein reductase] + 2 H2O + H(+). It carries out the reaction hancockiamide B + reduced [NADPH--hemoprotein reductase] + O2 = hancockiamide C + oxidized [NADPH--hemoprotein reductase] + 2 H2O + H(+). The catalysed reaction is hancockiamide D + reduced [NADPH--hemoprotein reductase] + O2 = hancockiamide H + oxidized [NADPH--hemoprotein reductase] + 2 H2O + H(+). The protein operates within secondary metabolite biosynthesis. Functionally, cytochrome P450 monooxygenase; part of the gene cluster that mediates the biosynthesis of hancockiamides, an unusual new family of N-cinnamoylated piperazines. The NRPS hkm10 and the NmrA-like reductase hkm9 are proposed to convert two molecules of L-Phe to the intermediary piperazine called xenocockiamide A. Xenocockiamide A is then converted to hancockiamide D via a series of hydroxylations and O-methylations. The tyrosinase hkm6 may catalyze an aromatic hydroxylation, then the 2-oxoglutarate-dependent Fe(II) dioxygenase hkm4 and the FAD-dependent phenol hydroxylase hkm7 may catalyze consecutive hydroxylations to install 2 more hydroxy groups, and the methyltransferase hkm8 probably catalyzes two methylations using 2 molecules of S-adenosyl-L-methionine (SAM). The NRPS hkm11 activates and transfers trans-cinnamate supplied by the PAL hkm12 to hancockiamide D and produces hancockiamide A. NRPS Hkm11 has the flexibility to tolerate the bulky hancockiamide G as a substrate and the absence of the acetyl-transferase hkm3 opens up the opportunity for hkm11 to introduce a second N-cinnamoyl moiety. The cytochrome P450 monooxygenase hkm5 catalyzes the methylenedioxy bridge formation, converting hancockiamide A into hancockiamide G. Hkm5 can also convert hancockiamide B into hancockiamide C, and hancockiamide D into hancockiamide H. The N-acetyltransferase hkm3 finally transfers an acetyl group to 1-N of piperazine, converting hancockiamide A into hancockiamide B and hancockiamide G into hancockiamide C. The sequence is that of Cytochrome P450 monooxygenase hkm5 from Aspergillus hancockii.